Reading from the N-terminus, the 493-residue chain is Aspartyl/glutamyl-tRNA(Asn/Gln) amidotransferase subunit B (493 aa).

Residues 268–291 (HYQEADGSTSKGRPKETAEDYRYF) are disordered. Positions 280–291 (RPKETAEDYRYF) are enriched in basic and acidic residues.

Belongs to the GatB/GatE family. GatB subfamily. Heterotrimer of A, B and C subunits.

It catalyses the reaction L-glutamyl-tRNA(Gln) + L-glutamine + ATP + H2O = L-glutaminyl-tRNA(Gln) + L-glutamate + ADP + phosphate + H(+). It carries out the reaction L-aspartyl-tRNA(Asn) + L-glutamine + ATP + H2O = L-asparaginyl-tRNA(Asn) + L-glutamate + ADP + phosphate + 2 H(+). In terms of biological role, allows the formation of correctly charged Asn-tRNA(Asn) or Gln-tRNA(Gln) through the transamidation of misacylated Asp-tRNA(Asn) or Glu-tRNA(Gln) in organisms which lack either or both of asparaginyl-tRNA or glutaminyl-tRNA synthetases. The reaction takes place in the presence of glutamine and ATP through an activated phospho-Asp-tRNA(Asn) or phospho-Glu-tRNA(Gln). In Corynebacterium glutamicum (strain ATCC 13032 / DSM 20300 / JCM 1318 / BCRC 11384 / CCUG 27702 / LMG 3730 / NBRC 12168 / NCIMB 10025 / NRRL B-2784 / 534), this protein is Aspartyl/glutamyl-tRNA(Asn/Gln) amidotransferase subunit B.